A 739-amino-acid chain; its full sequence is Nuclear pore complex protein NUP62 (739 aa).

Tandem repeats lie at residues 6-7 (FG), 17-18 (FG), 50-51 (FG), 52-53 (FG), 68-69 (FG), 70-71 (FG), 78-79 (FG), 80-81 (FG), 91-92 (FG), 93-94 (FG), 108-109 (FG), 110-111 (FG), 124-125 (FG), 141-142 (FG), 159-160 (FG), 174-175 (FG), 186-187 (FG), 207-208 (FG), and 221-222 (FG). The 26 X 2 AA repeats of F-G stretch occupies residues 6–450 (FGQSNSVGGF…AATFSTTGFG (445 aa)). The tract at residues 18 to 67 (GSSSATNSSSASSTTSPLSFSFNQSSNPSSTGFGFGSSVSSTPASSTTPS) is disordered. Over residues 79–218 (GFGSSASSST…ASSSAATSTS (140 aa)) the composition is skewed to low complexity. Positions 79-245 (GFGSSASSST…VASSAPGSSS (167 aa)) are disordered. Over residues 232–245 (PSFSVASSAPGSSS) the composition is skewed to low complexity. 5 repeat units span residues 248–249 (FG), 271–272 (FG), 280–281 (FG), 308–309 (FG), and 366–367 (FG). Disordered stretches follow at residues 281-329 (GSSS…ASPF), 341-366 (TASS…SFSF), and 399-418 (TTTS…SAPA). 2 repeat units span residues 426 to 427 (FG) and 449 to 450 (FG). Residues 471-533 (KTSTPASSSQ…AVAPVAGSPK (63 aa)) are disordered. A compositionally biased stretch (low complexity) spans 472 to 519 (TSTPASSSQPQTTSPAFSFSLPSSTSTTAPATSSATTTQTTLVVPSSS). Positions 584–674 (RLEIEVAKVV…IRSIIQSVNA (91 aa)) form a coiled coil.

Belongs to the nucleoporin NSP1/NUP62 family. In terms of assembly, part of the nuclear pore complex (NPC). The NPC has an eight-fold symmetrical structure comprising a central transport channel and two rings, the cytoplasmic and nuclear rings, to which eight filaments are attached. The cytoplasmic filaments have loose ends, while the nuclear filaments are joined in a distal ring, forming a nuclear basket. NPCs are highly dynamic in configuration and composition, and can be devided in 3 subcomplexes, the NUP62 subcomplex, the NUP107-160 subcomplex and the NUP93 subcomplex, containing approximately 30 different nucleoporin proteins. Interacts with NUP58 and the importin KPNB1.

The protein resides in the nucleus envelope. Its subcellular location is the nucleus. The protein localises to the nuclear pore complex. The polypeptide is Nuclear pore complex protein NUP62 (Arabidopsis thaliana (Mouse-ear cress)).